Consider the following 389-residue polypeptide: S-adenosylmethionine synthase (389 aa).

H15 provides a ligand contact to ATP. A Mg(2+)-binding site is contributed by D17. E43 contacts K(+). The L-methionine site is built by E56 and Q99. Residues 99 to 109 are flexible loop; sequence QSPDIAQGVNE. Residues 166–168, 234–235, D243, 249–250, A266, and K270 contribute to the ATP site; these read DAK, RF, and RK. Position 243 (D243) interacts with L-methionine. K274 serves as a coordination point for L-methionine.

This sequence belongs to the AdoMet synthase family. As to quaternary structure, homotetramer; dimer of dimers. Requires Mg(2+) as cofactor. K(+) is required as a cofactor.

Its subcellular location is the cytoplasm. It carries out the reaction L-methionine + ATP + H2O = S-adenosyl-L-methionine + phosphate + diphosphate. Its pathway is amino-acid biosynthesis; S-adenosyl-L-methionine biosynthesis; S-adenosyl-L-methionine from L-methionine: step 1/1. Its function is as follows. Catalyzes the formation of S-adenosylmethionine (AdoMet) from methionine and ATP. The overall synthetic reaction is composed of two sequential steps, AdoMet formation and the subsequent tripolyphosphate hydrolysis which occurs prior to release of AdoMet from the enzyme. This Neisseria gonorrhoeae (strain NCCP11945) protein is S-adenosylmethionine synthase.